Reading from the N-terminus, the 366-residue chain is Protein disulfide isomerase-like 2-1 (366 aa).

The signal sequence occupies residues 1–29 (MATPQISRKALASLLLLVAAAAAVSTASA). Thioredoxin domains follow at residues 30-138 (DDVL…SEAA) and 139-257 (TNVK…EKCG). Residues Cys59, Cys62, Cys178, and Cys181 each act as nucleophile in the active site. Intrachain disulfides connect Cys59–Cys62 and Cys178–Cys181.

This sequence belongs to the protein disulfide isomerase family.

The protein resides in the secreted. The catalysed reaction is Catalyzes the rearrangement of -S-S- bonds in proteins.. Functionally, acts as a protein-folding catalyst that interacts with nascent polypeptides to catalyze the formation, isomerization, and reduction or oxidation of disulfide bonds. May play a role in storage protein biogenesis. This chain is Protein disulfide isomerase-like 2-1 (PDIL2-1), found in Oryza sativa subsp. japonica (Rice).